A 141-amino-acid polypeptide reads, in one-letter code: Protein nfe1 (141 aa).

To the N-terminal of nitrogenase iron protein (NifH). Has lost the ATP-binding site.

Its function is as follows. Responsible for the nodulation efficiency and competitive ability of strain GR4 on alfalfa roots. This chain is Protein nfe1 (nfe1), found in Rhizobium meliloti (Ensifer meliloti).